We begin with the raw amino-acid sequence, 151 residues long: Nucleoside diphosphate kinase (151 aa).

The ATP site is built by K11, F59, R87, T93, R104, and N114. The active-site Pros-phosphohistidine intermediate is H117.

Belongs to the NDK family. As to quaternary structure, homotetramer. It depends on Mg(2+) as a cofactor.

Its subcellular location is the cytoplasm. The catalysed reaction is a 2'-deoxyribonucleoside 5'-diphosphate + ATP = a 2'-deoxyribonucleoside 5'-triphosphate + ADP. The enzyme catalyses a ribonucleoside 5'-diphosphate + ATP = a ribonucleoside 5'-triphosphate + ADP. Major role in the synthesis of nucleoside triphosphates other than ATP. The ATP gamma phosphate is transferred to the NDP beta phosphate via a ping-pong mechanism, using a phosphorylated active-site intermediate. The sequence is that of Nucleoside diphosphate kinase from Prochlorococcus marinus (strain NATL1A).